The primary structure comprises 335 residues: Adenine deaminase (335 aa).

Zn(2+)-binding residues include His-17, His-19, and His-197. Glu-200 functions as the Proton donor in the catalytic mechanism. Asp-278 is a Zn(2+) binding site. Substrate is bound at residue Asp-279.

The protein belongs to the metallo-dependent hydrolases superfamily. Adenosine and AMP deaminases family. Adenine deaminase type 2 subfamily. Zn(2+) is required as a cofactor.

The catalysed reaction is adenine + H2O + H(+) = hypoxanthine + NH4(+). Functionally, catalyzes the hydrolytic deamination of adenine to hypoxanthine. Plays an important role in the purine salvage pathway and in nitrogen catabolism. The sequence is that of Adenine deaminase from Marinomonas sp. (strain MWYL1).